The following is a 336-amino-acid chain: Monoacylglycerol lipase ABHD6 (336 aa).

Over 1 to 8 (MDLDVVNM) the chain is Extracellular. Residues 9-29 (FVIAGGTLAIPILAFVASFLL) form a helical; Signal-anchor for type II membrane protein membrane-spanning segment. The Cytoplasmic portion of the chain corresponds to 30 to 336 (WPSALIRIYY…VHNTDNKKLN (307 aa)). Residue Ser148 is the Nucleophile of the active site. Active-site charge relay system residues include Asp278 and His306.

The protein belongs to the AB hydrolase superfamily. Widely expressed with higher expression in small intestine, liver and brown adipose tissue. In brain, expressed postsynaptically in cortical neurons but not detected in microglia (at protein level).

The protein resides in the late endosome membrane. The protein localises to the lysosome membrane. Its subcellular location is the mitochondrion membrane. It catalyses the reaction Hydrolyzes glycerol monoesters of long-chain fatty acids.. It carries out the reaction 2-(5Z,8Z,11Z,14Z-eicosatetraenoyl)-glycerol + H2O = glycerol + (5Z,8Z,11Z,14Z)-eicosatetraenoate + H(+). The enzyme catalyses 1-octanoylglycerol + H2O = octanoate + glycerol + H(+). The catalysed reaction is 1-decanoylglycerol + H2O = decanoate + glycerol + H(+). It catalyses the reaction 1-dodecanoylglycerol + H2O = dodecanoate + glycerol + H(+). It carries out the reaction 1-tetradecanoylglycerol + H2O = tetradecanoate + glycerol + H(+). The enzyme catalyses 2-hexadecanoylglycerol + H2O = glycerol + hexadecanoate + H(+). The catalysed reaction is 2-(9Z-octadecenoyl)-glycerol + H2O = glycerol + (9Z)-octadecenoate + H(+). It catalyses the reaction 1-(9Z-octadecenoyl)-glycerol + H2O = glycerol + (9Z)-octadecenoate + H(+). It carries out the reaction 2-(9Z,12Z-octadecadienoyl)-glycerol + H2O = (9Z,12Z)-octadecadienoate + glycerol + H(+). The enzyme catalyses 1-(5Z,8Z,11Z,14Z-eicosatetraenoyl)-glycerol + H2O = glycerol + (5Z,8Z,11Z,14Z)-eicosatetraenoate + H(+). The catalysed reaction is 1-(9Z,12Z-octadecadienoyl)-glycerol + H2O = (9Z,12Z)-octadecadienoate + glycerol + H(+). It catalyses the reaction 3-(9Z-octadecenoyl)-sn-glycero-1-phospho-(3'-(9Z-octadecenoyl)-1'-sn-glycerol) + H2O = 3-(9Z-octadecenoyl)-sn-glycero-1-phospho-(1'-sn-glycerol) + (9Z)-octadecenoate + H(+). It carries out the reaction (S,S)-2-(9Z-octadecenoyl)-sn-glycero-1-phospho-(2'-(9Z-octadecenoyl)-1'-sn-glycerol) + H2O = (S,S)-2-(9Z-octadecenoyl)-sn-glycero-1-phospho-(1'-sn-glycerol) + (9Z)-octadecenoate + H(+). The enzyme catalyses (R,R)-2-(9Z-octadecenoyl)-sn-glycero-3-phospho-(2'-(9Z-octadecenoyl)-3'-sn-glycerol) + H2O = (R,R)-2-(9Z-octadecenoyl)-sn-glycero-3-phospho-(3'-sn-glycerol) + (9Z)-octadecenoate + H(+). Functionally, lipase that preferentially hydrolysis medium-chain saturated monoacylglycerols including 2-arachidonoylglycerol. Through 2-arachidonoylglycerol degradation may regulate endocannabinoid signaling pathways. Also has a lysophosphatidyl lipase activity with a preference for lysophosphatidylglycerol among other lysophospholipids. Also able to degrade bis(monoacylglycero)phosphate (BMP) and constitutes the major enzyme for BMP catabolism. BMP, also known as lysobisphosphatidic acid, is enriched in late endosomes and lysosomes and plays a key role in the formation of intraluminal vesicles and in lipid sorting. This chain is Monoacylglycerol lipase ABHD6, found in Mus musculus (Mouse).